Here is a 108-residue protein sequence, read N- to C-terminus: PTS system fructose-like EIIB component 1 (108 aa).

A PTS EIIB type-2 domain is found at 1 to 101 (MSKKLIALCA…AAGIIKEIEE (101 aa)). Cys-11 acts as the Phosphocysteine intermediate in catalysis. At Cys-11 the chain carries Phosphocysteine; by EIIA.

The protein resides in the cytoplasm. The catalysed reaction is D-fructose(out) + N(pros)-phospho-L-histidyl-[protein] = D-fructose 1-phosphate(in) + L-histidyl-[protein]. In terms of biological role, the phosphoenolpyruvate-dependent sugar phosphotransferase system (sugar PTS), a major carbohydrate active transport system, catalyzes the phosphorylation of incoming sugar substrates concomitantly with their translocation across the cell membrane. The enzyme II FryABC PTS system is involved in fructose transport. The polypeptide is PTS system fructose-like EIIB component 1 (fryB) (Shigella flexneri).